The sequence spans 474 residues: tRNA-2-methylthio-N(6)-dimethylallyladenosine synthase (474 aa).

The MTTase N-terminal domain maps to 3 to 120 (QKLHIKTWGC…LPEMINQIRG (118 aa)). [4Fe-4S] cluster-binding residues include cysteine 12, cysteine 49, cysteine 83, cysteine 157, cysteine 161, and cysteine 164. The Radical SAM core domain occupies 143–375 (RAEGPTAFVS…QERINQQAAQ (233 aa)). Residues 378–441 (RRMLGTEQRV…TNSLRGEVVR (64 aa)) enclose the TRAM domain.

Belongs to the methylthiotransferase family. MiaB subfamily. As to quaternary structure, monomer. Requires [4Fe-4S] cluster as cofactor.

It localises to the cytoplasm. The catalysed reaction is N(6)-dimethylallyladenosine(37) in tRNA + (sulfur carrier)-SH + AH2 + 2 S-adenosyl-L-methionine = 2-methylsulfanyl-N(6)-dimethylallyladenosine(37) in tRNA + (sulfur carrier)-H + 5'-deoxyadenosine + L-methionine + A + S-adenosyl-L-homocysteine + 2 H(+). Functionally, catalyzes the methylthiolation of N6-(dimethylallyl)adenosine (i(6)A), leading to the formation of 2-methylthio-N6-(dimethylallyl)adenosine (ms(2)i(6)A) at position 37 in tRNAs that read codons beginning with uridine. This Haemophilus influenzae (strain PittGG) protein is tRNA-2-methylthio-N(6)-dimethylallyladenosine synthase.